The chain runs to 160 residues: 2-C-methyl-D-erythritol 2,4-cyclodiphosphate synthase (160 aa).

2 residues coordinate a divalent metal cation: Asp11 and His13. Residues 11–13 (DVH) and 37–38 (HS) each bind 4-CDP-2-C-methyl-D-erythritol 2-phosphate. Position 45 (His45) interacts with a divalent metal cation. 4-CDP-2-C-methyl-D-erythritol 2-phosphate-binding positions include 59–61 (DIG), 64–68 (FPDTD), 135–138 (TTTE), Phe142, and Arg145.

The protein belongs to the IspF family. As to quaternary structure, homotrimer. A divalent metal cation is required as a cofactor.

The catalysed reaction is 4-CDP-2-C-methyl-D-erythritol 2-phosphate = 2-C-methyl-D-erythritol 2,4-cyclic diphosphate + CMP. It participates in isoprenoid biosynthesis; isopentenyl diphosphate biosynthesis via DXP pathway; isopentenyl diphosphate from 1-deoxy-D-xylulose 5-phosphate: step 4/6. Involved in the biosynthesis of isopentenyl diphosphate (IPP) and dimethylallyl diphosphate (DMAPP), two major building blocks of isoprenoid compounds. Catalyzes the conversion of 4-diphosphocytidyl-2-C-methyl-D-erythritol 2-phosphate (CDP-ME2P) to 2-C-methyl-D-erythritol 2,4-cyclodiphosphate (ME-CPP) with a corresponding release of cytidine 5-monophosphate (CMP). The polypeptide is 2-C-methyl-D-erythritol 2,4-cyclodiphosphate synthase (Alcanivorax borkumensis (strain ATCC 700651 / DSM 11573 / NCIMB 13689 / SK2)).